We begin with the raw amino-acid sequence, 113 residues long: U-scoloptoxin(16)-Sa1a (113 aa).

Positions 1–29 (MAPPSNPLFVVLCWALFAYLMLVLRDIQA) are cleaved as a signal peptide.

It belongs to the scoloptoxin-16 family. Post-translationally, contains 4 disulfide bonds. As to expression, expressed by the venom gland.

The protein resides in the secreted. This is U-scoloptoxin(16)-Sa1a from Scolopendra alternans (Florida Keys giant centipede).